The sequence spans 359 residues: Beta-1,3-galactosyltransferase bre-2 (359 aa).

The Cytoplasmic portion of the chain corresponds to 1 to 11 (MRQSRRASSRV). A helical; Signal-anchor for type II membrane protein transmembrane segment spans residues 12–29 (NRLVVIFIIVASGFLLLY). Topologically, residues 30-359 (KNTQQFTQID…NPDLEELKEK (330 aa)) are lumenal. Asparagine 73, asparagine 163, and asparagine 209 each carry an N-linked (GlcNAc...) asparagine glycan.

It belongs to the glycosyltransferase 31 family.

It localises to the golgi apparatus membrane. Its pathway is protein modification; protein glycosylation. Functionally, transfers N-acetylgalactosamine onto carbohydrate substrates. Involved in susceptibility to pore-forming crystal toxins in conjunction with bre-1, bre-3, bre-4, and bre-5. Involved in resistance to the nematotoxic C.cinerea galectin Cgl2. This Caenorhabditis elegans protein is Beta-1,3-galactosyltransferase bre-2.